The chain runs to 475 residues: MLTPISIEKEHIRLINLLHFINEQNRWFTIKELSDYLQVADKTVRKYLKLLEDEIPPSWNLLVQKGKGIYLKKPLNESLSFVESKILRKSLNLQICEELVFKKNSMQSLAQKLHLQVGALYPIINQINYDIQSSHLNIKKKPLEISGREQDVRVFMLRLYCNIPNDYWPFPYINKQNITDLINKMEKILNVQMYTYSKHKLCVLFAITISRLLSGNTIDNVSGLILVNKNDDHYKTVASITSELQNSFGVTLHETEISFLALALLLSLGNSITTDSNKTLTSYKKTIMPLAKEITKGIEHKLQLGINYDESFLTYVVLIIKKALDKNFIQYYNYNIKFIRHIKQRHPNTFNTIQECISNLNYTVYSHFDCYEISLLTMHFETQRMLFKNNPKKIYVYTSQGCIHREYISALLEKRYNGLIKIVRNTIINLTNESLQDMEIDIIISNVNLPIKNIPIVQISEFPTERDFHEIKKII.

2 consecutive PRD domains span residues Pro-169 to Thr-274 and Ser-282 to Asn-390.

It belongs to the AtxA/AcpA family.

Functionally, acts in trans to stimulate anthrax toxins expression. It activates the transcription of the pagA, cya and lef genes. It also activates capB, a gene required for capsule production. The polypeptide is Anthrax toxin expression trans-acting positive regulator (atxA) (Bacillus anthracis).